The chain runs to 122 residues: Large ribosomal subunit protein uL14 (122 aa).

It belongs to the universal ribosomal protein uL14 family. As to quaternary structure, part of the 50S ribosomal subunit. Forms a cluster with proteins L3 and L19. In the 70S ribosome, L14 and L19 interact and together make contacts with the 16S rRNA in bridges B5 and B8.

Its function is as follows. Binds to 23S rRNA. Forms part of two intersubunit bridges in the 70S ribosome. The chain is Large ribosomal subunit protein uL14 from Helicobacter acinonychis (strain Sheeba).